A 543-amino-acid polypeptide reads, in one-letter code: MSADASTNSNASLDEKNLNITSEAEIKNEDVTAEPVLSTVLSPNGKIVYISDKVDEAMKLAEEAKEIEVTPEEDRKLRWKIDYCMFPLMCILYAVQFMDKISTSSAAVMGLRTDLKMHGDQYSWVTSAFYFGYLFMNLGPVQFIFQRTSHMSKMLAVFIVIWGMLLALHAAPTVKYPSFIVLRVLLGCAESVVTPCFTIITAQYWKTEEQFTRVSIWFGMNGLGSILINAIAYGVYIHQDSYAIKGWRTLFVITGVITIFIGILIFLWIPDDPSKARFLSKREKLMVVQRIRSNQQGFGNHEIKKYQIIEALKDVRTWLYFLFTVSSNIPNGGISSFMSILLNSDFGYSSKETLLMGLPTGAVELVGCPLFGILAVYAANKKIPFWKYKLSWAIFAAVLALIASCMLGFATNSKKARLAGAYLWYISPVSFICVLSNISANSSGYSKKWTVSSINLVAYAAANLAGPQTFIAKQAPKYHGAKVAMVVCYAVMIVLLSILLIVNLRENKRRDKIAAERGFPEETENLEFSDLTDFENPNFRYTL.

At 1 to 80 (MSADASTNSN…PEEDRKLRWK (80 aa)) the chain is on the cytoplasmic side. The helical transmembrane segment at 81-97 (IDYCMFPLMCILYAVQF) threads the bilayer. At 98 to 123 (MDKISTSSAAVMGLRTDLKMHGDQYS) the chain is on the extracellular side. A helical membrane pass occupies residues 124-145 (WVTSAFYFGYLFMNLGPVQFIF). At 146–154 (QRTSHMSKM) the chain is on the cytoplasmic side. The chain crosses the membrane as a helical span at residues 155–171 (LAVFIVIWGMLLALHAA). Topologically, residues 172–178 (PTVKYPS) are extracellular. A helical membrane pass occupies residues 179 to 200 (FIVLRVLLGCAESVVTPCFTII). The Cytoplasmic segment spans residues 201 to 213 (TAQYWKTEEQFTR). A helical membrane pass occupies residues 214–237 (VSIWFGMNGLGSILINAIAYGVYI). Residues 238-248 (HQDSYAIKGWR) lie on the Extracellular side of the membrane. Residues 249 to 269 (TLFVITGVITIFIGILIFLWI) form a helical membrane-spanning segment. Residues 270-317 (PDDPSKARFLSKREKLMVVQRIRSNQQGFGNHEIKKYQIIEALKDVRT) lie on the Cytoplasmic side of the membrane. The helical transmembrane segment at 318-342 (WLYFLFTVSSNIPNGGISSFMSILL) threads the bilayer. The Extracellular portion of the chain corresponds to 343–352 (NSDFGYSSKE). Residues 353–377 (TLLMGLPTGAVELVGCPLFGILAVY) form a helical membrane-spanning segment. At 378-389 (AANKKIPFWKYK) the chain is on the cytoplasmic side. The helical transmembrane segment at 390-411 (LSWAIFAAVLALIASCMLGFAT) threads the bilayer. Residues 412 to 417 (NSKKAR) are Extracellular-facing. A helical membrane pass occupies residues 418-435 (LAGAYLWYISPVSFICVL). Topologically, residues 436-453 (SNISANSSGYSKKWTVSS) are cytoplasmic. Residues 454 to 472 (INLVAYAAANLAGPQTFIA) traverse the membrane as a helical segment. The Extracellular segment spans residues 473–482 (KQAPKYHGAK). The chain crosses the membrane as a helical span at residues 483 to 504 (VAMVVCYAVMIVLLSILLIVNL). The Cytoplasmic segment spans residues 505 to 543 (RENKRRDKIAAERGFPEETENLEFSDLTDFENPNFRYTL).

Belongs to the major facilitator superfamily. Allantoate permease family.

It is found in the membrane. Its function is as follows. Component of the allantoate transport system. The sequence is that of Allantoate permease (DAL5) from Saccharomyces cerevisiae (strain ATCC 204508 / S288c) (Baker's yeast).